The following is a 935-amino-acid chain: uncharacterized protein (935 aa).

Disordered stretches follow at residues 1-32 (MDIGLITNKEDDEENDLSIKSPYSTTKNQNNN), 74-228 (NNNN…YNNG), 265-287 (NNENKKKNNDNENNNYPNFNNNN), 342-376 (NQQKHQKKIQHQENSNFEQLEKPEQLSHNSESSKT), 394-414 (SPTQQQQQQQQQQQQQQQQQY), 466-491 (KNINNNNSNNNNNNNNNNNNNNNNNI), 516-559 (PHQQ…TSTI), 727-755 (SPSSSTSSETTTSTSTTTNNTSTTTISPS), and 778-799 (GGGSSGGGGSGGGVNNNNNVQN). Positions 74 to 227 (NNNNNTTNNN…NNNDDNIYNN (154 aa)) are enriched in low complexity. A coiled-coil region spans residues 262-331 (KKNNNENKKK…NNINNNNNKI (70 aa)). Residues 265-274 (NNENKKKNND) are compositionally biased toward basic and acidic residues. Low complexity predominate over residues 275-287 (NENNNYPNFNNNN). Positions 367–376 (LSHNSESSKT) are enriched in polar residues. Low complexity predominate over residues 397–414 (QQQQQQQQQQQQQQQQQY). Residues 522-559 (SSPTSSSTSTSSTTSSSSSSSSSSSSSSSSSTSSTSTI) are compositionally biased toward low complexity. Residues 778-791 (GGGSSGGGGSGGGV) are compositionally biased toward gly residues.

This is an uncharacterized protein from Dictyostelium discoideum (Social amoeba).